The chain runs to 472 residues: MPNANAIANVFKLIEENNVKFVLLRFTDIKGKEHGVSIPVSLVDEDMFEDGKMFDGSSVEGWKTINKADMLLMPMAETAIVDPFAQIPTLSIRCSVYEPTTMQSYDRDPRSIAIRAENYMRSTGIADQAFFGPEPEFFLFDDVRFNVSMNKASFSIDDIEAAWNTNKKYEEGNNAYRPLKKGGYCAVAPIDSAHDIRSEMCLILEEMGLVIEAHHHEVATAGQNEIATKFNTLTLKADETQIYKHVVQNVALEHGKTACFMPKPITGDNGSGMHCNMSLSKDGKNIFQGDKYAGLSETALYYIGGIIKHAKALNAFTNPSTNSYKRLVPGYEAPVLLAYSASNRSASIRIPAVTNPKAIRVEARFPDPLANPYLAFAALLMAGLDGVVNKIHPGDAMDKNLYDLPPEELKDIPAVASSLEEALNSLEKDYEFLTQGGVFAKDFIDAFISIKRKEVERLNMAPHPVEFEMYYA.

One can recognise a GS beta-grasp domain in the interval 17–101 (NNVKFVLLRF…IRCSVYEPTT (85 aa)). The 364-residue stretch at 109 to 472 (PRSIAIRAEN…HPVEFEMYYA (364 aa)) folds into the GS catalytic domain. Positions 134 and 136 each coordinate Mg(2+). Residue E212 coordinates ATP. The Mg(2+) site is built by E217 and E225. L-glutamate is bound by residues 269–270 (NG) and G270. H274 is a Mg(2+) binding site. Residues 276–278 (NMS) and S278 contribute to the ATP site. L-glutamate-binding residues include R326, E332, and R344. The ATP site is built by R344, R349, and K357. Residue E362 coordinates Mg(2+). Residue R364 coordinates L-glutamate. Y402 is modified (O-AMP-tyrosine).

This sequence belongs to the glutamine synthetase family. In terms of assembly, oligomer of 12 subunits arranged in the form of two hexameric ring. Requires Mg(2+) as cofactor.

It is found in the cytoplasm. The enzyme catalyses L-glutamate + NH4(+) + ATP = L-glutamine + ADP + phosphate + H(+). With respect to regulation, the activity of this enzyme could be controlled by adenylation under conditions of abundant glutamine. In terms of biological role, catalyzes the ATP-dependent biosynthesis of glutamine from glutamate and ammonia. The sequence is that of Glutamine synthetase from Haemophilus influenzae (strain ATCC 51907 / DSM 11121 / KW20 / Rd).